We begin with the raw amino-acid sequence, 301 residues long: GTPase Era (301 aa).

One can recognise an Era-type G domain in the interval 7 to 175 (YCGFIAIVGR…AGIVRKHLPE (169 aa)). The G1 stretch occupies residues 15–22 (GRPNVGKS). A GTP-binding site is contributed by 15–22 (GRPNVGKS). The segment at 41–45 (QTTRH) is G2. The G3 stretch occupies residues 62–65 (DTPG). GTP contacts are provided by residues 62-66 (DTPGL) and 124-127 (NKVD). The interval 124 to 127 (NKVD) is G4. A G5 region spans residues 154–156 (ISA). A KH type-2 domain is found at 206 to 283 (LGAELPYSVT…HLELWVKVKS (78 aa)).

Belongs to the TRAFAC class TrmE-Era-EngA-EngB-Septin-like GTPase superfamily. Era GTPase family. Monomer.

The protein localises to the cytoplasm. The protein resides in the cell inner membrane. Its function is as follows. An essential GTPase that binds both GDP and GTP, with rapid nucleotide exchange. Plays a role in 16S rRNA processing and 30S ribosomal subunit biogenesis and possibly also in cell cycle regulation and energy metabolism. This is GTPase Era from Salmonella paratyphi B (strain ATCC BAA-1250 / SPB7).